A 147-amino-acid polypeptide reads, in one-letter code: HTH-type transcriptional regulator MgrA (147 aa).

Residues 8 to 139 (KEQLCFSLYN…LNRLLGKVIH (132 aa)) enclose the HTH marR-type domain. The H-T-H motif DNA-binding region spans 55–78 (VKKVVTELALDTGTVSPLLKRMEQ).

The protein resides in the cytoplasm. Regulatory protein involved in autolytic activity, multidrug resistance and virulence. Controls autolysis by inactivating LytM, LytN (autolysins) and SarV (autolysis activator) and activating ArlRS, LrgAB and LytSR (autolysis inhibitors). Acts as a dual regulator for resistance to multiple drugs by inactivating NorB and tet38 and activating NorA. Positively controls the expression of virulence accessory gene regulator (agr) to promote alpha-hemolysin (hla) transcription and down-regulates staphylococcal accessory regulator (sarS), leading to repression of surface protein A (spa). Binds directly to hla promoter to augment its activation. Binds to sarS promoter to down-regulate spa expression. The sequence is that of HTH-type transcriptional regulator MgrA (mgrA) from Staphylococcus aureus (strain NCTC 8325 / PS 47).